The sequence spans 352 residues: Holliday junction branch migration complex subunit RuvB (352 aa).

A large ATPase domain (RuvB-L) region spans residues 13 to 201; the sequence is FSLRKKELRL…FGISQKIEFY (189 aa). ATP-binding positions include arginine 41, glycine 82, lysine 85, threonine 86, threonine 87, 148–150, arginine 191, tyrosine 201, and arginine 238; that span reads EDF. Threonine 86 contacts Mg(2+). A small ATPAse domain (RuvB-S) region spans residues 202–273; the sequence is TCDELKQIID…LIKKALNSYQ (72 aa). Residues 276–352 are head domain (RuvB-H); the sequence is EKGLDYVDRQ…KYIDSKNDNF (77 aa). Positions 330 and 335 each coordinate DNA.

Belongs to the RuvB family. Homohexamer. Forms an RuvA(8)-RuvB(12)-Holliday junction (HJ) complex. HJ DNA is sandwiched between 2 RuvA tetramers; dsDNA enters through RuvA and exits via RuvB. An RuvB hexamer assembles on each DNA strand where it exits the tetramer. Each RuvB hexamer is contacted by two RuvA subunits (via domain III) on 2 adjacent RuvB subunits; this complex drives branch migration. In the full resolvosome a probable DNA-RuvA(4)-RuvB(12)-RuvC(2) complex forms which resolves the HJ.

It localises to the cytoplasm. It catalyses the reaction ATP + H2O = ADP + phosphate + H(+). Functionally, the RuvA-RuvB-RuvC complex processes Holliday junction (HJ) DNA during genetic recombination and DNA repair, while the RuvA-RuvB complex plays an important role in the rescue of blocked DNA replication forks via replication fork reversal (RFR). RuvA specifically binds to HJ cruciform DNA, conferring on it an open structure. The RuvB hexamer acts as an ATP-dependent pump, pulling dsDNA into and through the RuvAB complex. RuvB forms 2 homohexamers on either side of HJ DNA bound by 1 or 2 RuvA tetramers; 4 subunits per hexamer contact DNA at a time. Coordinated motions by a converter formed by DNA-disengaged RuvB subunits stimulates ATP hydrolysis and nucleotide exchange. Immobilization of the converter enables RuvB to convert the ATP-contained energy into a lever motion, pulling 2 nucleotides of DNA out of the RuvA tetramer per ATP hydrolyzed, thus driving DNA branch migration. The RuvB motors rotate together with the DNA substrate, which together with the progressing nucleotide cycle form the mechanistic basis for DNA recombination by continuous HJ branch migration. Branch migration allows RuvC to scan DNA until it finds its consensus sequence, where it cleaves and resolves cruciform DNA. This is Holliday junction branch migration complex subunit RuvB from Prochlorococcus marinus (strain MIT 9312).